A 298-amino-acid polypeptide reads, in one-letter code: tRNA dimethylallyltransferase (298 aa).

10-17 is a binding site for ATP; the sequence is GPTASGKT. 12–17 contacts substrate; it reads TASGKT. An interaction with substrate tRNA region spans residues 35–38; sequence DSMC.

This sequence belongs to the IPP transferase family. As to quaternary structure, monomer. Requires Mg(2+) as cofactor.

The enzyme catalyses adenosine(37) in tRNA + dimethylallyl diphosphate = N(6)-dimethylallyladenosine(37) in tRNA + diphosphate. In terms of biological role, catalyzes the transfer of a dimethylallyl group onto the adenine at position 37 in tRNAs that read codons beginning with uridine, leading to the formation of N6-(dimethylallyl)adenosine (i(6)A). This Hydrogenobaculum sp. (strain Y04AAS1) protein is tRNA dimethylallyltransferase.